A 213-amino-acid chain; its full sequence is Protein-L-isoaspartate O-methyltransferase (213 aa).

Serine 61 is an active-site residue.

It belongs to the methyltransferase superfamily. L-isoaspartyl/D-aspartyl protein methyltransferase family.

The protein resides in the cytoplasm. The enzyme catalyses [protein]-L-isoaspartate + S-adenosyl-L-methionine = [protein]-L-isoaspartate alpha-methyl ester + S-adenosyl-L-homocysteine. Its function is as follows. Catalyzes the methyl esterification of L-isoaspartyl residues in peptides and proteins that result from spontaneous decomposition of normal L-aspartyl and L-asparaginyl residues. It plays a role in the repair and/or degradation of damaged proteins. This is Protein-L-isoaspartate O-methyltransferase from Maricaulis maris (strain MCS10) (Caulobacter maris).